The sequence spans 178 residues: MKILFDFLPIVIFFVVYKMTGNIIIATAILIPATIIQVGFTWFKNRTIEKMHLVSLALVVLLGGATVLLGDGDFIKWKPTIVNGLFAIAFLGSQFIGDKNIIQRMMGDKLDLPFKVWRTLNLAWVGFFIVSGVTNLYVAFSYSEEIWVDFKLFGLLGMTIVFIILQGIYLSSHLQNKE.

The next 6 helical transmembrane spans lie at 1–21 (MKIL…KMTG), 23–43 (IIIA…FTWF), 51–71 (MHLV…LLGD), 77–97 (WKPT…QFIG), 120–140 (LNLA…YVAF), and 150–170 (FKLF…GIYL).

The protein belongs to the YciB family.

It localises to the cell inner membrane. Its function is as follows. Plays a role in cell envelope biogenesis, maintenance of cell envelope integrity and membrane homeostasis. This is Inner membrane-spanning protein YciB from Marinomonas sp. (strain MWYL1).